A 192-amino-acid polypeptide reads, in one-letter code: uncharacterized protein (192 aa).

Residues His29–Ser160 form the Nudix hydrolase domain. The Nudix box motif lies at Gly67 to Ala89. The Mg(2+) site is built by Glu83 and Glu87.

This sequence belongs to the Nudix hydrolase family. PCD1 subfamily. Mn(2+) serves as cofactor. It depends on Mg(2+) as a cofactor.

In terms of biological role, probably mediates the hydrolysis of some nucleoside diphosphate derivatives. This is an uncharacterized protein from Shigella flexneri.